A 127-amino-acid polypeptide reads, in one-letter code: Basic leucine zipper transcriptional factor ATF-like 3 (127 aa).

Residues 1–72 (MSQGLPAAGS…LHEEYESLEQ (72 aa)) are disordered. Residues Ser-2 and Ser-31 each carry the phosphoserine modification. A bZIP domain is found at 35-98 (DDRKVRRREK…KHLTEALKEH (64 aa)). The interval 37–62 (RKVRRREKNRVAAQRSRKKQTQKADK) is basic motif. Residues 58–67 (QKADKLHEEY) show a composition bias toward basic and acidic residues. Residues 63–91 (LHEEYESLEQENTMLRREIGKLTEELKHL) are leucine-zipper.

This sequence belongs to the bZIP family. Heterodimer; heterodimerizes with JUN family proteins. Interacts with JUN.

The protein resides in the nucleus. Its function is as follows. AP-1 family transcription factor that controls the differentiation of CD8(+) thymic conventional dendritic cells in the immune system. Required for development of CD8-alpha(+) classical dendritic cells (cDCs) and related CD103(+) dendritic cells that cross-present antigens to CD8 T-cells and produce interleukin-12 (IL12) in response to pathogens. Acts via the formation of a heterodimer with JUN family proteins that recognizes and binds DNA sequence 5'-TGA[CG]TCA-3' and regulates expression of target genes. The sequence is that of Basic leucine zipper transcriptional factor ATF-like 3 (BATF3) from Homo sapiens (Human).